A 131-amino-acid chain; its full sequence is ATP synthase epsilon chain (131 aa).

It belongs to the ATPase epsilon chain family. In terms of assembly, F-type ATPases have 2 components, CF(1) - the catalytic core - and CF(0) - the membrane proton channel. CF(1) has five subunits: alpha(3), beta(3), gamma(1), delta(1), epsilon(1). CF(0) has three main subunits: a, b and c.

It is found in the cell inner membrane. Its function is as follows. Produces ATP from ADP in the presence of a proton gradient across the membrane. This Wolinella succinogenes (strain ATCC 29543 / DSM 1740 / CCUG 13145 / JCM 31913 / LMG 7466 / NCTC 11488 / FDC 602W) (Vibrio succinogenes) protein is ATP synthase epsilon chain.